A 168-amino-acid chain; its full sequence is S-ribosylhomocysteine lyase (168 aa).

Residues His-54, His-58, and Cys-128 each coordinate Fe cation.

It belongs to the LuxS family. As to quaternary structure, homodimer. The cofactor is Fe cation.

The catalysed reaction is S-(5-deoxy-D-ribos-5-yl)-L-homocysteine = (S)-4,5-dihydroxypentane-2,3-dione + L-homocysteine. Involved in the synthesis of autoinducer 2 (AI-2) which is secreted by bacteria and is used to communicate both the cell density and the metabolic potential of the environment. The regulation of gene expression in response to changes in cell density is called quorum sensing. Catalyzes the transformation of S-ribosylhomocysteine (RHC) to homocysteine (HC) and 4,5-dihydroxy-2,3-pentadione (DPD). The sequence is that of S-ribosylhomocysteine lyase from Histophilus somni (strain 129Pt) (Haemophilus somnus).